A 530-amino-acid polypeptide reads, in one-letter code: Estrogen receptor beta (530 aa).

Residues 1–148 (MEIKNSPSSL…SPSAKRDAHF (148 aa)) form a modulating region. Residue Ser-61 is modified to Phosphoserine; alternate. Ser-61 carries O-linked (GlcNAc) serine; alternate glycosylation. Ser-87 and Ser-105 each carry phosphoserine; by MAPK. 2 NR C4-type zinc fingers span residues 149–169 (CAVC…CEGC) and 185–209 (CPAT…LRKC). The nuclear receptor DNA-binding region spans 149 to 214 (CAVCSDYASG…RLRKCYEVGM (66 aa)). Positions 264-498 (SPEQLVLTLL…DLLLEMLNAH (235 aa)) constitute an NR LBD domain. Polar residues predominate over residues 506–515 (SISGSECCST). A disordered region spans residues 506–530 (SISGSECCSTEDSKSKEGSQNLQSQ).

This sequence belongs to the nuclear hormone receptor family. NR3 subfamily. Binds DNA as a homodimer. Can form a heterodimer with ESR1. Interacts with NCOA1, NCOA3, NCOA5 and NCOA6 coactivators, leading to a strong increase of transcription of target genes. Interacts with UBE1C and AKAP13. Interacts with DNTTIP2. Interacts with CCDC62 in the presence of estradiol/E2; this interaction seems to enhance the transcription of target genes. Interacts with DNAAF4. Interacts with PRMT2. Interacts with CCAR2 (via N-terminus) in a ligand-independent manner. Interacts with RBM39, in the presence of estradiol (E2). Interacts with STUB1/CHIP. Post-translationally, phosphorylation at Ser-87 and Ser-105 recruits NCOA1. In terms of tissue distribution, expressed in prostate, ovary, Leydig cells and in epithelium of the efferent ductules and of the initial segment of the epididymis.

It localises to the nucleus. Its function is as follows. Nuclear hormone receptor. Binds estrogens with an affinity similar to that of ESR1/ER-alpha, and activates expression of reporter genes containing estrogen response elements (ERE) in an estrogen-dependent manner. This chain is Estrogen receptor beta (Esr2), found in Mus musculus (Mouse).